A 266-amino-acid polypeptide reads, in one-letter code: Non-structural maintenance of chromosomes element 1 homolog (266 aa).

Residues methionine 1–alanine 102 form an interaction with NSMCE3 region. An RING-type; atypical zinc finger spans residues cysteine 191–asparagine 232. The interval glutamate 246–histidine 266 is disordered. The residue at position 251 (serine 251) is a Phosphoserine. Basic residues predominate over residues serine 256 to histidine 266.

It belongs to the NSE1 family. In terms of assembly, component of the SMC5-SMC6 complex which consists at least of SMC5, SMC6, NSMCE2, NSMCE1, NSMCE4A or EID3 and NSMCE3. NSMCE1, NSMCE4A or EID3 and NSMCE3 probably form a subcomplex that bridges the head domains of the SMC5-SMC6 heterodimer. Interacts with NSMCE3. Interacts with MAGEF1. Post-translationally, ubiquitinated.

It localises to the nucleus. It is found in the chromosome. The protein localises to the telomere. The catalysed reaction is S-ubiquitinyl-[E2 ubiquitin-conjugating enzyme]-L-cysteine + [acceptor protein]-L-lysine = [E2 ubiquitin-conjugating enzyme]-L-cysteine + N(6)-ubiquitinyl-[acceptor protein]-L-lysine.. RING-type zinc finger-containing E3 ubiquitin ligase that assembles with melanoma antigen protein (MAGE) to catalyze the direct transfer of ubiquitin from E2 ubiquitin-conjugating enzyme to a specific substrate. Within MAGE-RING ubiquitin ligase complex, MAGE stimulates and specifies ubiquitin ligase activity likely through recruitment and/or stabilization of the E2 ubiquitin-conjugating enzyme at the E3:substrate complex. Involved in maintenance of genome integrity, DNA damage response and DNA repair. NSMCE3/MAGEG1 and NSMCE1 ubiquitin ligase are components of SMC5-SMC6 complex and may positively regulate homologous recombination-mediated DNA repair. MAGEF1-NSMCE1 ubiquitin ligase promotes proteasomal degradation of MMS19, a key component of the cytosolic iron-sulfur protein assembly (CIA) machinery. Down-regulation of MMS19 impairs the activity of several DNA repair and metabolism enzymes such as ERCC2/XPD, FANCJ, RTEL1 and POLD1 that require iron-sulfur clusters as cofactors. This is Non-structural maintenance of chromosomes element 1 homolog from Homo sapiens (Human).